Reading from the N-terminus, the 226-residue chain is Ribonuclease 3 (226 aa).

Residues 4–127 (LEEFEKKLGY…VMGAIYLEKG (124 aa)) form the RNase III domain. E40 serves as a coordination point for Mg(2+). D44 is an active-site residue. Mg(2+) contacts are provided by N113 and E116. E116 is a catalytic residue. The region spanning 154–223 (DFKTALQEFT…AKEALKILKA (70 aa)) is the DRBM domain.

It belongs to the ribonuclease III family. In terms of assembly, homodimer. Requires Mg(2+) as cofactor.

The protein resides in the cytoplasm. It catalyses the reaction Endonucleolytic cleavage to 5'-phosphomonoester.. Digests double-stranded RNA. Involved in the processing of primary rRNA transcript to yield the immediate precursors to the large and small rRNAs (23S and 16S). Processes some mRNAs, and tRNAs when they are encoded in the rRNA operon. Processes pre-crRNA and tracrRNA of type II CRISPR loci if present in the organism. This Nitratiruptor sp. (strain SB155-2) protein is Ribonuclease 3.